The primary structure comprises 83 residues: MLVLTRRVGEKIVIGEDIVITVLKIEGNSVKIGIEAPKHVKILREELYEELKSENIKASEVSKDDLKGVLRNDKGYKGPSASS.

Belongs to the CsrA/RsmA family. As to quaternary structure, homodimer; the beta-strands of each monomer intercalate to form a hydrophobic core, while the alpha-helices form wings that extend away from the core.

The protein resides in the cytoplasm. Functionally, a translational regulator that binds mRNA to regulate translation initiation and/or mRNA stability. Usually binds in the 5'-UTR at or near the Shine-Dalgarno sequence preventing ribosome-binding, thus repressing translation. Its main target seems to be the major flagellin gene, while its function is anatagonized by FliW. In Thermotoga maritima (strain ATCC 43589 / DSM 3109 / JCM 10099 / NBRC 100826 / MSB8), this protein is Translational regulator CsrA.